We begin with the raw amino-acid sequence, 109 residues long: Photosystem II reaction center Psb28 protein (109 aa).

This sequence belongs to the Psb28 family. As to quaternary structure, part of the photosystem II complex.

It is found in the plastid. Its subcellular location is the chloroplast thylakoid membrane. This is Photosystem II reaction center Psb28 protein from Cyanidioschyzon merolae (strain NIES-3377 / 10D) (Unicellular red alga).